The primary structure comprises 329 residues: L-lactate dehydrogenase (329 aa).

NAD(+) contacts are provided by residues Val18, Glu39, Lys46, Tyr71, and 85–86; that span reads GA. Residues Gln88 and Arg94 each coordinate substrate. NAD(+) contacts are provided by residues Ser107, 124–126, and Ser149; that span reads AAN. Residue 126 to 129 coordinates substrate; the sequence is NPVD. 154–157 contributes to the substrate binding site; it reads DSAR. Positions 159 and 174 each coordinate beta-D-fructose 1,6-bisphosphate. Catalysis depends on His181, which acts as the Proton acceptor. At Tyr226 the chain carries Phosphotyrosine. Substrate is bound at residue Thr235.

This sequence belongs to the LDH/MDH superfamily. LDH family. As to quaternary structure, homotetramer.

It localises to the cytoplasm. It catalyses the reaction (S)-lactate + NAD(+) = pyruvate + NADH + H(+). It functions in the pathway fermentation; pyruvate fermentation to lactate; (S)-lactate from pyruvate: step 1/1. Allosterically activated by fructose 1,6-bisphosphate (FBP). Functionally, catalyzes the conversion of lactate to pyruvate. In Streptococcus agalactiae serotype V (strain ATCC BAA-611 / 2603 V/R), this protein is L-lactate dehydrogenase.